A 443-amino-acid polypeptide reads, in one-letter code: Exodeoxyribonuclease 7 large subunit (443 aa).

This sequence belongs to the XseA family. As to quaternary structure, heterooligomer composed of large and small subunits.

It is found in the cytoplasm. The catalysed reaction is Exonucleolytic cleavage in either 5'- to 3'- or 3'- to 5'-direction to yield nucleoside 5'-phosphates.. Functionally, bidirectionally degrades single-stranded DNA into large acid-insoluble oligonucleotides, which are then degraded further into small acid-soluble oligonucleotides. The polypeptide is Exodeoxyribonuclease 7 large subunit (Vibrio parahaemolyticus serotype O3:K6 (strain RIMD 2210633)).